The primary structure comprises 375 residues: Queuine tRNA-ribosyltransferase (375 aa).

D90 serves as the catalytic Proton acceptor. Substrate contacts are provided by residues 90–94 (DSGGF), D144, Q193, and G220. The RNA binding stretch occupies residues 251–257 (GVGTPED). D270 serves as the catalytic Nucleophile. An RNA binding; important for wobble base 34 recognition region spans residues 275 to 279 (TRNAR). Zn(2+) contacts are provided by C308, C310, C313, and H339.

Belongs to the queuine tRNA-ribosyltransferase family. In terms of assembly, homodimer. Within each dimer, one monomer is responsible for RNA recognition and catalysis, while the other monomer binds to the replacement base PreQ1. The cofactor is Zn(2+).

The enzyme catalyses 7-aminomethyl-7-carbaguanine + guanosine(34) in tRNA = 7-aminomethyl-7-carbaguanosine(34) in tRNA + guanine. It functions in the pathway tRNA modification; tRNA-queuosine biosynthesis. Functionally, catalyzes the base-exchange of a guanine (G) residue with the queuine precursor 7-aminomethyl-7-deazaguanine (PreQ1) at position 34 (anticodon wobble position) in tRNAs with GU(N) anticodons (tRNA-Asp, -Asn, -His and -Tyr). Catalysis occurs through a double-displacement mechanism. The nucleophile active site attacks the C1' of nucleotide 34 to detach the guanine base from the RNA, forming a covalent enzyme-RNA intermediate. The proton acceptor active site deprotonates the incoming PreQ1, allowing a nucleophilic attack on the C1' of the ribose to form the product. After dissociation, two additional enzymatic reactions on the tRNA convert PreQ1 to queuine (Q), resulting in the hypermodified nucleoside queuosine (7-(((4,5-cis-dihydroxy-2-cyclopenten-1-yl)amino)methyl)-7-deazaguanosine). The polypeptide is Queuine tRNA-ribosyltransferase (Methylibium petroleiphilum (strain ATCC BAA-1232 / LMG 22953 / PM1)).